A 381-amino-acid polypeptide reads, in one-letter code: UDP-N-acetylglucosamine--N-acetylmuramyl-(pentapeptide) pyrophosphoryl-undecaprenol N-acetylglucosamine transferase (381 aa).

UDP-N-acetyl-alpha-D-glucosamine is bound by residues 10–12 (TGG), asparagine 124, arginine 165, serine 190, isoleucine 245, and glutamine 290. The disordered stretch occupies residues 361 to 381 (WGSPAGQERPGHGPVRPPDLA).

Belongs to the glycosyltransferase 28 family. MurG subfamily.

The protein resides in the cell inner membrane. The catalysed reaction is di-trans,octa-cis-undecaprenyl diphospho-N-acetyl-alpha-D-muramoyl-L-alanyl-D-glutamyl-meso-2,6-diaminopimeloyl-D-alanyl-D-alanine + UDP-N-acetyl-alpha-D-glucosamine = di-trans,octa-cis-undecaprenyl diphospho-[N-acetyl-alpha-D-glucosaminyl-(1-&gt;4)]-N-acetyl-alpha-D-muramoyl-L-alanyl-D-glutamyl-meso-2,6-diaminopimeloyl-D-alanyl-D-alanine + UDP + H(+). It functions in the pathway cell wall biogenesis; peptidoglycan biosynthesis. In terms of biological role, cell wall formation. Catalyzes the transfer of a GlcNAc subunit on undecaprenyl-pyrophosphoryl-MurNAc-pentapeptide (lipid intermediate I) to form undecaprenyl-pyrophosphoryl-MurNAc-(pentapeptide)GlcNAc (lipid intermediate II). The chain is UDP-N-acetylglucosamine--N-acetylmuramyl-(pentapeptide) pyrophosphoryl-undecaprenol N-acetylglucosamine transferase from Anaeromyxobacter sp. (strain Fw109-5).